The following is a 490-amino-acid chain: Betaine aldehyde dehydrogenase (490 aa).

Residues isoleucine 27 and aspartate 93 each coordinate K(+). Residue 150–152 (GAW) participates in NAD(+) binding. Catalysis depends on lysine 162, which acts as the Charge relay system. 176 to 179 (KPSE) is an NAD(+) binding site. Valine 180 contributes to the K(+) binding site. Residue 230–233 (GTDT) participates in NAD(+) binding. Leucine 246 contacts K(+). Residue glutamate 252 is the Proton acceptor of the active site. Positions 254, 286, and 387 each coordinate NAD(+). Catalysis depends on cysteine 286, which acts as the Nucleophile. Cysteine sulfenic acid (-SOH) is present on cysteine 286. K(+) is bound by residues lysine 457 and glycine 460. Catalysis depends on glutamate 464, which acts as the Charge relay system.

It belongs to the aldehyde dehydrogenase family. Dimer of dimers. Requires K(+) as cofactor.

It carries out the reaction betaine aldehyde + NAD(+) + H2O = glycine betaine + NADH + 2 H(+). The protein operates within amine and polyamine biosynthesis; betaine biosynthesis via choline pathway; betaine from betaine aldehyde: step 1/1. In terms of biological role, involved in the biosynthesis of the osmoprotectant glycine betaine. Catalyzes the irreversible oxidation of betaine aldehyde to the corresponding acid. The polypeptide is Betaine aldehyde dehydrogenase (Pseudomonas fluorescens (strain Pf0-1)).